The following is a 244-amino-acid chain: Large ribosomal subunit protein uL30A (244 aa).

Residues 1 to 26 (MAAEKILTPESQLKKSKAQQKTAEQV) are disordered.

It belongs to the universal ribosomal protein uL30 family. As to quaternary structure, component of the large ribosomal subunit (LSU). Mature yeast ribosomes consist of a small (40S) and a large (60S) subunit. The 40S small subunit contains 1 molecule of ribosomal RNA (18S rRNA) and 33 different proteins (encoded by 57 genes). The large 60S subunit contains 3 rRNA molecules (25S, 5.8S and 5S rRNA) and 46 different proteins (encoded by 81 genes).

It localises to the cytoplasm. Component of the ribosome, a large ribonucleoprotein complex responsible for the synthesis of proteins in the cell. The small ribosomal subunit (SSU) binds messenger RNAs (mRNAs) and translates the encoded message by selecting cognate aminoacyl-transfer RNA (tRNA) molecules. The large subunit (LSU) contains the ribosomal catalytic site termed the peptidyl transferase center (PTC), which catalyzes the formation of peptide bonds, thereby polymerizing the amino acids delivered by tRNAs into a polypeptide chain. The nascent polypeptides leave the ribosome through a tunnel in the LSU and interact with protein factors that function in enzymatic processing, targeting, and the membrane insertion of nascent chains at the exit of the ribosomal tunnel. The polypeptide is Large ribosomal subunit protein uL30A (Saccharomyces cerevisiae (strain ATCC 204508 / S288c) (Baker's yeast)).